A 299-amino-acid chain; its full sequence is Peroxisomal biogenesis factor 19 (299 aa).

A disordered region spans residues 1–63; that stretch reads MAAAEEDYGV…SPGDTAKDSL (63 aa). The residue at position 2 (Ala2) is an N-acetylalanine. Residues 2–56 form a docking to the peroxisome membrane and binding to PEX3 region; sequence AAAEEDYGVGAEADRELEELLESALDDFDKAKPSPAPPSTTTAPDASGPQKRSPG. Residues 2-91 form a necessary for PEX19 function on peroxisome biogenesis region; sequence AAAEEDYGVG…QATAEFEKAM (90 aa). The span at 16 to 27 shows a compositional bias: acidic residues; it reads RELEELLESALD. A phosphoserine mark is found at Ser35, Ser54, and Ser66. Thr236 carries the phosphothreonine modification. Residue Cys296 is modified to Cysteine methyl ester. Residue Cys296 is the site of S-farnesyl cysteine attachment. The propeptide at 297 to 299 is removed in mature form; sequence LIM.

The protein belongs to the peroxin-19 family. As to quaternary structure, interacts with a broad range of peroxisomal membrane proteins, including PEX3, PEX10, PEX11A, PEX11B, PEX12, PEX13, PEX14 and PEX16, PXMP2/PMP22, PXMP4/PMP24, SLC25A17/PMP34, ABCD1/ALDP, ABCD2/ALDRP, and ABCD3/PMP70. Also interacts with the tumor suppressor CDKN2A/p19ARF.

It localises to the cytoplasm. The protein localises to the peroxisome membrane. Its function is as follows. Necessary for early peroxisomal biogenesis. Acts both as a cytosolic chaperone and as an import receptor for peroxisomal membrane proteins (PMPs). Binds and stabilizes newly synthesized PMPs in the cytoplasm by interacting with their hydrophobic membrane-spanning domains, and targets them to the peroxisome membrane by binding to the integral membrane protein PEX3. Excludes CDKN2A from the nucleus and prevents its interaction with MDM2, which results in active degradation of TP53. This is Peroxisomal biogenesis factor 19 (PEX19) from Pongo abelii (Sumatran orangutan).